The primary structure comprises 334 residues: Cell division protein ZipA (334 aa).

Over Met1–Glu2 the chain is Periplasmic. Residues Leu3 to Ile23 form a helical membrane-spanning segment. At Tyr24 to Ser334 the chain is on the cytoplasmic side.

This sequence belongs to the ZipA family. As to quaternary structure, interacts with FtsZ via their C-terminal domains.

It is found in the cell inner membrane. Essential cell division protein that stabilizes the FtsZ protofilaments by cross-linking them and that serves as a cytoplasmic membrane anchor for the Z ring. Also required for the recruitment to the septal ring of downstream cell division proteins. The chain is Cell division protein ZipA from Haemophilus ducreyi (strain 35000HP / ATCC 700724).